The following is a 97-amino-acid chain: CRISPR-associated endoribonuclease Cas2 1 (97 aa).

D12 lines the Mg(2+) pocket.

Belongs to the CRISPR-associated endoribonuclease Cas2 protein family. As to quaternary structure, homodimer, forms a heterotetramer with a Cas1 homodimer. The cofactor is Mg(2+).

In terms of biological role, CRISPR (clustered regularly interspaced short palindromic repeat) is an adaptive immune system that provides protection against mobile genetic elements (viruses, transposable elements and conjugative plasmids). CRISPR clusters contain sequences complementary to antecedent mobile elements and target invading nucleic acids. CRISPR clusters are transcribed and processed into CRISPR RNA (crRNA). Functions as a ssRNA-specific endoribonuclease. Involved in the integration of spacer DNA into the CRISPR cassette. The protein is CRISPR-associated endoribonuclease Cas2 1 of Francisella tularensis subsp. novicida (strain U112).